The chain runs to 747 residues: Ferrichrome outer membrane transporter/phage receptor (747 aa).

A signal peptide spans 1–33 (MARSKTAQPKHSLRKIAVVVATAVSGMSVYAQA). The Periplasmic segment spans residues 34–192 (AVEPKEDTIT…NMVSKRPTTE (159 aa)). Residues 40 to 47 (DTITVTAA) carry the TonB box motif. The TBDR plug domain occupies 75 to 187 (PIQKVPQSIS…PGGLLNMVSK (113 aa)). Ferrichrome is bound by residues R114, Q133, and 148 to 149 (FY). The TBDR beta-barrel domain maps to 192 to 747 (EPLKEVQFKA…QVVATATFRF (556 aa)). A beta stranded transmembrane segment spans residues 193 to 201 (PLKEVQFKA). Over 202 to 206 (GTDSL) the chain is Extracellular. Residues 207 to 215 (FQTGFDFSD) form a beta stranded membrane-spanning segment. The Periplasmic segment spans residues 216 to 222 (SLDDDGV). A beta stranded transmembrane segment spans residues 223–231 (YSYRLTGLA). Residues 232-245 (RSANAQQKGSEEQR) lie on the Extracellular side of the membrane. Residues 246–255 (YAIAPAFTWR) form a beta stranded membrane-spanning segment. Residues 256–259 (PDDK) are Periplasmic-facing. Residues 260 to 268 (TNFTFLSYF) traverse the membrane as a beta stranded segment. The Extracellular portion of the chain corresponds to 269–312 (QNEPETGYYGWLPKEGTVEPLPNGKRLPTDFNEGAKNNTYSRNE). Residue 277–279 (YGW) coordinates ferrichrome. A beta stranded membrane pass occupies residues 313–321 (KMVGYSFDH). The Periplasmic portion of the chain corresponds to 322-326 (EFNDT). A beta stranded transmembrane segment spans residues 327–335 (FTVRQNLRF). Residues 336 to 387 (AENKTSQNSVYGYGVCSDPANAYSKQCAALAPADKGHYLARKYVVDDEKLQN) are Extracellular-facing. 346-348 (YGY) is a ferrichrome binding site. A disulfide bridge connects residues C351 and C362. The beta stranded transmembrane segment at 388 to 396 (FSVDTQLQS) threads the bilayer. Residues 397 to 404 (KFATGDID) are Periplasmic-facing. A beta stranded membrane pass occupies residues 405-413 (HTLLTGVDF). The Extracellular portion of the chain corresponds to 414–464 (MRMRNDINAWFGYDDSVPLLNLYNPVNTDFDFNAKDPANSGPYRILNKQKQ). Residue F424 coordinates ferrichrome. A beta stranded transmembrane segment spans residues 465-473 (TGVYVQDQA). The Periplasmic segment spans residues 474–477 (QWDK). Residues 478–486 (VLVTLGGRY) form a beta stranded membrane-spanning segment. Residues 487–508 (DWADQESLNRVAGTTDKRDDKQ) lie on the Extracellular side of the membrane. Residues 509–517 (FTWRGGVNY) form a beta stranded membrane-spanning segment. Topologically, residues 518-522 (LFDNG) are periplasmic. The beta stranded transmembrane segment at 523 to 531 (VTPYFSYSE) threads the bilayer. Residues 532–551 (SFEPSSQVGKDGNIFAPSKG) lie on the Extracellular side of the membrane. The chain crosses the membrane as a beta stranded span at residues 552–560 (KQYEVGVKY). At 561-565 (VPEDR) the chain is on the periplasmic side. The beta stranded transmembrane segment at 566–574 (PIVVTGAVY) threads the bilayer. The Extracellular segment spans residues 575-601 (NLTKTNNLMADPEGSFFSVEGGEIRAR). Residues 602–610 (GVEIEAKAA) traverse the membrane as a beta stranded segment. Over 611-613 (LSA) the chain is Periplasmic. The chain crosses the membrane as a beta stranded span at residues 614–622 (SVNVVGSYT). Residues 623-645 (YTDAEYTTDTTYKGNTPAQVPKH) are Extracellular-facing. A beta stranded transmembrane segment spans residues 646–654 (MASLWADYT). The Periplasmic segment spans residues 655–661 (FFDGPLS). A beta stranded transmembrane segment spans residues 662–670 (GLTLGTGGR). Residues 671–689 (YTGSSYGDPANSFKVGSYT) lie on the Extracellular side of the membrane. Residues 690–698 (VVDALVRYD) traverse the membrane as a beta stranded segment. At 699–705 (LARVGMA) the chain is on the periplasmic side. The beta stranded transmembrane segment at 706 to 714 (GSNVALHVN) threads the bilayer. Residues 715–737 (NLFDREYVASCFNTYGCFWGAER) lie on the Extracellular side of the membrane. A disulfide bond links C725 and C731. The TonB C-terminal box signature appears at 730 to 747 (GCFWGAERQVVATATFRF). A735 contributes to the ferrichrome binding site. A beta stranded transmembrane segment spans residues 738-746 (QVVATATFR). Position 747 (F747) is a topological domain, periplasmic.

It belongs to the TonB-dependent receptor family. As to quaternary structure, monomer. Interacts with TonB. Interacts with Escherichia phage T5 receptor-binding protein pb5 (RBP-pb5); this interaction is necessary for the entry of the viral genome into the host cell.

The protein localises to the cell outer membrane. Binding of ferrichrome or colicin M enhances the interaction between FhuA and TonB. TonB activates FhuA through interaction with the beta-barrel. In terms of biological role, involved in the uptake of iron in complex with ferrichrome, a hydroxamate-type siderophore. Binds and transports ferrichrome-iron across the outer membrane. In addition to its role in ferrichrome-iron transport, transports the antibiotic albomycin, which is a structural analog of ferrichrome, and acts as a receptor for colicin M, microcin J25 and bacteriophages T1, T5, phi80 and UC-1. The energy source, which is required for all FhuA functions except infection by phage T5, is provided by the inner membrane TonB system. The protein is Ferrichrome outer membrane transporter/phage receptor of Escherichia coli (strain K12).